The chain runs to 181 residues: Swi1-interacting protein swi3 (181 aa).

The disordered stretch occupies residues 1 to 47; it reads MSTAASDSGVEKLVEENKREEVKKNEEEKEFDLGLEENPDSVKKPRK. A compositionally biased stretch (basic and acidic residues) spans 9–27; it reads GVEKLVEENKREEVKKNEE. Over residues 28 to 39 the composition is skewed to acidic residues; sequence EKEFDLGLEENP.

Belongs to the CSM3 family. In terms of assembly, fork protection complex (FPC) consisting of swi1 and swi3 interacts with mat1 cis-acting sequences and mat1-proximal polar-terminator of replication (RTS1).

It is found in the nucleus. Its function is as follows. Forms a fork protection complex (FPC) with swi1. FPC coordinates leading and lagging strand synthesis and moves with the replication fork. It is required for programmed fork-pausing which is necessary for mating-type switching. FPC stabilizes replication forks in a configuration that is recognized by replication checkpoint sensors. It is involved in termination at the mat1-proximal polar-terminator of replication (RTS1) and also required for activation of the Rad53-like checkpoint kinase cds1. The polypeptide is Swi1-interacting protein swi3 (swi3) (Schizosaccharomyces pombe (strain 972 / ATCC 24843) (Fission yeast)).